The sequence spans 270 residues: MKTVSGVKQLSFTPSIFKKITPEQYLSHLLNQDVRSDGRSVSEFREIVINDNCISTANGSAIIRAGENVFVCGIKAEIAEPFENSPNEGWIVPNLELSPLCSSKFKPGPPSDLAQVVSQELHQTLQQSNLINLQSLCIFEKKAAWVLYADIICLNYDGSAFDYAWAALFAALKTVKLPTAVWDEDLERVICASTLTRPVQLSTEVRSFSWSVFDDKLLADPTDEEEDLSTEFLTIMLNSSKNIVKIIKLGGTHIQPLLLKKCIEVARSKF.

It belongs to the RNase PH family. As to quaternary structure, component of the RNA exosome complex. Specifically part of the catalytically inactive RNA exosome core complex (Exo-9) which may associate with the catalytic subunits rrp66 and dis3 in cytoplasmic- and nuclear-specific RNA exosome complex forms. Exo-9 is formed by a hexameric base ring of RNase PH domain-containing subunits and a cap ring consisting of csl4, rrp4 and rrp40.

The protein resides in the cytoplasm. The protein localises to the nucleus. It is found in the nucleolus. Its function is as follows. Non-catalytic component of the RNA exosome complex which has 3'-&gt;5' exoribonuclease activity and participates in a multitude of cellular RNA processing and degradation events. In the nucleus, the RNA exosome complex is involved in proper maturation of stable RNA species such as rRNA, snRNA and snoRNA, in the elimination of RNA processing by-products and non-coding 'pervasive' transcripts, such as antisense RNA species and cryptic unstable transcripts (CUTs), and of mRNAs with processing defects, thereby limiting or excluding their export to the cytoplasm. In the cytoplasm, the RNA exosome complex is involved in general mRNA turnover and in RNA surveillance pathways, preventing translation of aberrant mRNAs. The catalytic inactive RNA exosome core complex of 9 subunits (Exo-9) is proposed to play a pivotal role in the binding and presentation of RNA for ribonucleolysis, and to serve as a scaffold for the association with catalytic subunits and accessory proteins or complexes. ski6 is part of the hexameric ring of RNase PH domain-containing subunits proposed to form a central channel which threads RNA substrates for degradation. This is Exosome complex component rrp43 (rrp43) from Schizosaccharomyces pombe (strain 972 / ATCC 24843) (Fission yeast).